A 330-amino-acid polypeptide reads, in one-letter code: Phosphate acyltransferase (330 aa).

The protein belongs to the PlsX family. In terms of assembly, homodimer. Probably interacts with PlsY.

The protein localises to the cytoplasm. It catalyses the reaction a fatty acyl-[ACP] + phosphate = an acyl phosphate + holo-[ACP]. Its pathway is lipid metabolism; phospholipid metabolism. Catalyzes the reversible formation of acyl-phosphate (acyl-PO(4)) from acyl-[acyl-carrier-protein] (acyl-ACP). This enzyme utilizes acyl-ACP as fatty acyl donor, but not acyl-CoA. The chain is Phosphate acyltransferase from Bacillus cereus (strain G9842).